A 265-amino-acid polypeptide reads, in one-letter code: Large ribosomal subunit protein bL9m (265 aa).

The transit peptide at 1 to 49 (MAASVAPGVRTLWWAGAAWLRQGGIRELFRPRIEGSTPGRDFSLSHYQS) directs the protein to the mitochondrion.

The protein belongs to the bacterial ribosomal protein bL9 family. As to quaternary structure, component of the mitochondrial ribosome large subunit (39S) which comprises a 16S rRNA and about 50 distinct proteins.

It is found in the mitochondrion. The sequence is that of Large ribosomal subunit protein bL9m (Mrpl9) from Mus musculus (Mouse).